The sequence spans 329 residues: Ketol-acid reductoisomerase (NADP(+)) (329 aa).

The region spanning 2 to 182 is the KARI N-terminal Rossmann domain; the sequence is TQLFYDTDAD…GGTRAGILET (181 aa). NADP(+) contacts are provided by residues 25 to 28, S51, S53, and 83 to 86; these read YGSQ and DEFQ. The active site involves H108. Residue G134 participates in NADP(+) binding. Residues 183–328 enclose the KARI C-terminal knotted domain; it reads NFKEETETDL…KGLRAMFSWL (146 aa). Positions 191, 195, 227, and 231 each coordinate Mg(2+). Substrate is bound at residue S252.

It belongs to the ketol-acid reductoisomerase family. Requires Mg(2+) as cofactor.

The catalysed reaction is (2R)-2,3-dihydroxy-3-methylbutanoate + NADP(+) = (2S)-2-acetolactate + NADPH + H(+). The enzyme catalyses (2R,3R)-2,3-dihydroxy-3-methylpentanoate + NADP(+) = (S)-2-ethyl-2-hydroxy-3-oxobutanoate + NADPH + H(+). It functions in the pathway amino-acid biosynthesis; L-isoleucine biosynthesis; L-isoleucine from 2-oxobutanoate: step 2/4. Its pathway is amino-acid biosynthesis; L-valine biosynthesis; L-valine from pyruvate: step 2/4. Functionally, involved in the biosynthesis of branched-chain amino acids (BCAA). Catalyzes an alkyl-migration followed by a ketol-acid reduction of (S)-2-acetolactate (S2AL) to yield (R)-2,3-dihydroxy-isovalerate. In the isomerase reaction, S2AL is rearranged via a Mg-dependent methyl migration to produce 3-hydroxy-3-methyl-2-ketobutyrate (HMKB). In the reductase reaction, this 2-ketoacid undergoes a metal-dependent reduction by NADPH to yield (R)-2,3-dihydroxy-isovalerate. The polypeptide is Ketol-acid reductoisomerase (NADP(+)) (Prochlorococcus marinus subsp. pastoris (strain CCMP1986 / NIES-2087 / MED4)).